Consider the following 436-residue polypeptide: Testican-3 (436 aa).

The signal sequence occupies residues 1–22; that stretch reads MLKVSAVLCVCAAAWCSQSLAA. Disulfide bonds link C90-C101, C95-C111, C139-C169, C142-C162, C151-C183, C317-C341, C352-C359, and C361-C380. The 53-residue stretch at 133–185 folds into the Kazal-like domain; that stretch reads GPILSTCKQCPVVYPSPVCGSDGHTYSFQCKLEYQACVLGKQISVKCEGHCPC. The region spanning 314–380 is the Thyroglobulin type-1 domain; sequence DPPCQTELSN…GSRINGVADC (67 aa). Residues S387 and S392 are each glycosylated (O-linked (Xyl...) (glycosaminoglycan) serine). Residues 393–436 are disordered; sequence GDFHEWTDDEDDEDDIMNDEDEIEDDDEDEGDDDDGGDDHDGYI. Positions 399–430 are enriched in acidic residues; it reads TDDEDDEDDIMNDEDEIEDDDEDEGDDDDGGD.

Post-translationally, contains chondroitin sulfate and heparan sulfate O-linked oligosaccharides. In terms of tissue distribution, expressed in brain.

Its subcellular location is the secreted. It is found in the extracellular space. The protein resides in the extracellular matrix. May participate in diverse steps of neurogenesis. Inhibits the processing of pro-matrix metalloproteinase 2 (MMP-2) by MT1-MMP and MT3-MMP. May interfere with tumor invasion. This is Testican-3 (SPOCK3) from Pongo abelii (Sumatran orangutan).